Here is a 107-residue protein sequence, read N- to C-terminus: MAQEFVNCKIQSGKVVVFIKPTCPYCRKTQEILSQLPFKRGLLEFVDITATNNTNAIQDYLQQLTGARTVPRVFIGKDCIGGCSDLLSMQQNGELTARLKQIGALQL.

At Ala2 the chain carries N-acetylalanine. The Glutaredoxin domain occupies Gln3–Gln106. At Lys9 the chain carries N6-succinyllysine. Intrachain disulfides connect Cys23–Cys26 and Cys79–Cys83.

It belongs to the glutaredoxin family.

The protein localises to the cytoplasm. Has a glutathione-disulfide oxidoreductase activity in the presence of NADPH and glutathione reductase. Reduces low molecular weight disulfides and proteins. The polypeptide is Glutaredoxin-1 (Glrx) (Rattus norvegicus (Rat)).